We begin with the raw amino-acid sequence, 333 residues long: Cytochrome f (333 aa).

An N-terminal signal peptide occupies residues 1 to 37 (MRNSCKKARRTRPLKATIQALLVAIATMTFFFTSDIA). The Cytoplasmic segment spans residues 38–298 (LPQSAAAYPF…TEIVLQDPNR (261 aa)). 4 residues coordinate heme: Tyr-45, Cys-66, Cys-69, and His-70. Residues 299–319 (VKWMIAFICLVMLAQLMLILK) traverse the membrane as a helical segment. Topologically, residues 320–333 (KKQVEKVQAAEMNF) are lumenal, thylakoid.

Belongs to the cytochrome f family. As to quaternary structure, the 4 large subunits of the cytochrome b6-f complex are cytochrome b6, subunit IV (17 kDa polypeptide, PetD), cytochrome f and the Rieske protein, while the 4 small subunits are PetG, PetL, PetM and PetN. The complex functions as a dimer. Heme serves as cofactor.

Its subcellular location is the cellular thylakoid membrane. Component of the cytochrome b6-f complex, which mediates electron transfer between photosystem II (PSII) and photosystem I (PSI), cyclic electron flow around PSI, and state transitions. In Mastigocladus laminosus (Fischerella sp.), this protein is Cytochrome f (petA).